The primary structure comprises 610 residues: Atypical kinase COQ8, mitochondrial (610 aa).

Positions 98–111 are enriched in basic and acidic residues; sequence GVKHLQEQSSKEIK. A disordered region spans residues 98–144; that stretch reads GVKHLQEQSSKEIKNPISQPILPNKKDEISPAKPSAIDSSIKDVTKS.

Belongs to the protein kinase superfamily. ADCK protein kinase family.

Its subcellular location is the mitochondrion. It functions in the pathway cofactor biosynthesis; ubiquinone biosynthesis. Functionally, atypical kinase involved in the biosynthesis of coenzyme Q, also named ubiquinone, an essential lipid-soluble electron transporter for aerobic cellular respiration. Its substrate specificity is still unclear: may act as a protein kinase that mediates phosphorylation of coq3. According to other reports, acts as a small molecule kinase, possibly a lipid kinase that phosphorylates a prenyl lipid in the ubiquinone biosynthesis pathway, as suggested by its ability to bind coenzyme Q lipid intermediates. The sequence is that of Atypical kinase COQ8, mitochondrial from Schizosaccharomyces pombe (strain 972 / ATCC 24843) (Fission yeast).